The sequence spans 226 residues: Putative DNA repair protein recA homolog 4 (226 aa).

41–48 is a binding site for ATP; that stretch reads GPEASGKT.

This sequence belongs to the RecA family.

The protein resides in the cytoplasm. Its function is as follows. Involved in recombination ability and DNA strand transfer activity. This Arabidopsis thaliana (Mouse-ear cress) protein is Putative DNA repair protein recA homolog 4.